The primary structure comprises 100 residues: Urease subunit gamma (100 aa).

Belongs to the urease gamma subunit family. In terms of assembly, heterotrimer of UreA (gamma), UreB (beta) and UreC (alpha) subunits. Three heterotrimers associate to form the active enzyme. The apoenzyme interacts with an accessory complex composed of UreD, UreF and UreG, which is required for the assembly of the nickel containing metallocenter of UreC. The UreE protein may also play a direct role as a metallochaperone in nickel transfer to the urease apoprotein.

It is found in the cytoplasm. It carries out the reaction urea + 2 H2O + H(+) = hydrogencarbonate + 2 NH4(+). It participates in nitrogen metabolism; urea degradation; CO(2) and NH(3) from urea (urease route): step 1/1. With respect to regulation, the apoenzyme can be activated in vitro in the presence of nickel ions and carbon dioxide, which promotes carbamylation of 'Lys-217' of the UreC (alpha) subunit. The sequence is that of Urease subunit gamma from Klebsiella aerogenes (Enterobacter aerogenes).